Here is a 338-residue protein sequence, read N- to C-terminus: Putative clathrin assembly protein At5g10410 (338 aa).

Residues phenylalanine 27 to proline 157 form the ENTH domain.

It localises to the membrane. The protein resides in the clathrin-coated pit. Its subcellular location is the golgi apparatus. It is found in the cytoplasmic vesicle. The protein localises to the clathrin-coated vesicle. This is Putative clathrin assembly protein At5g10410 from Arabidopsis thaliana (Mouse-ear cress).